The following is a 157-amino-acid chain: Stalk-specific protein A (157 aa).

A signal peptide spans 1–19 (MRSILILLSLLLTIAFASA).

It localises to the secreted. This Dictyostelium discoideum (Social amoeba) protein is Stalk-specific protein A (staA).